Consider the following 861-residue polypeptide: Putative glutamate--cysteine ligase 2-2 (861 aa).

The carboxylate-amine ligase stretch occupies residues 1–372 (MSDARIVAVG…RDVPPAGAAA (372 aa)). Residues 373 to 861 (ALGSAPAVSA…GSKDTWIPRR (489 aa)) are unknown.

The protein in the N-terminal section; belongs to the glutamate--cysteine ligase type 2 family. YbdK subfamily.

It catalyses the reaction L-cysteine + L-glutamate + ATP = gamma-L-glutamyl-L-cysteine + ADP + phosphate + H(+). ATP-dependent carboxylate-amine ligase which exhibits weak glutamate--cysteine ligase activity. This chain is Putative glutamate--cysteine ligase 2-2, found in Frankia casuarinae (strain DSM 45818 / CECT 9043 / HFP020203 / CcI3).